A 295-amino-acid polypeptide reads, in one-letter code: Cyclic dipyrimidine nucleotide synthase CdnE (295 aa).

The interval 1 to 28 (MAKYTEDQLTSWTKPPSDSEQTKLENSE) is disordered. Positions 7–19 (DQLTSWTKPPSDS) are enriched in polar residues. 2 residues coordinate UTP: Gln-51 and Ser-53. Asp-67 contributes to the Mg(2+) binding site. Lys-123, Asn-169, Arg-197, Phe-217, and Lys-276 together coordinate UTP. The Pyrimidine specificity motif (R/Q)xW in donor pocket signature appears at 275–277 (RKW).

It belongs to the CD-NTase family. E02 subfamily. In terms of assembly, monomer. Mg(2+) is required as a cofactor.

The catalysed reaction is 2 UTP = c-di-UMP + 2 diphosphate. The enzyme catalyses UTP + CTP = cyclic CMP-UMP + 2 diphosphate. Its function is as follows. Cyclic nucleotide synthase (second messenger synthase) of a CBASS antivirus system. CBASS (cyclic oligonucleotide-based antiphage signaling system) provides immunity against bacteriophage. The CD-NTase protein synthesizes cyclic nucleotides in response to infection; these serve as specific second messenger signals. The signals activate a diverse range of effectors, leading to bacterial cell death and thus abortive phage infection. A type I-B(UU) CBASS system. This is Cyclic dipyrimidine nucleotide synthase CdnE from Cecembia lonarensis (strain CCUG 58316 / KCTC 22772 / LW9).